A 419-amino-acid chain; its full sequence is Gamma-glutamyl phosphate reductase (419 aa).

This sequence belongs to the gamma-glutamyl phosphate reductase family.

It is found in the cytoplasm. The enzyme catalyses L-glutamate 5-semialdehyde + phosphate + NADP(+) = L-glutamyl 5-phosphate + NADPH + H(+). Its pathway is amino-acid biosynthesis; L-proline biosynthesis; L-glutamate 5-semialdehyde from L-glutamate: step 2/2. Functionally, catalyzes the NADPH-dependent reduction of L-glutamate 5-phosphate into L-glutamate 5-semialdehyde and phosphate. The product spontaneously undergoes cyclization to form 1-pyrroline-5-carboxylate. In Bordetella avium (strain 197N), this protein is Gamma-glutamyl phosphate reductase.